We begin with the raw amino-acid sequence, 292 residues long: Ribosomal protein L11 methyltransferase (292 aa).

Threonine 144, glycine 165, aspartate 187, and asparagine 229 together coordinate S-adenosyl-L-methionine.

It belongs to the methyltransferase superfamily. PrmA family.

Its subcellular location is the cytoplasm. It carries out the reaction L-lysyl-[protein] + 3 S-adenosyl-L-methionine = N(6),N(6),N(6)-trimethyl-L-lysyl-[protein] + 3 S-adenosyl-L-homocysteine + 3 H(+). Functionally, methylates ribosomal protein L11. The chain is Ribosomal protein L11 methyltransferase from Pseudomonas putida (strain ATCC 700007 / DSM 6899 / JCM 31910 / BCRC 17059 / LMG 24140 / F1).